The following is a 161-amino-acid chain: Anthranilate 1,2-dioxygenase small subunit (161 aa).

It belongs to the bacterial ring-hydroxylating dioxygenase beta subunit family. Part of a multicomponent enzyme system composed of a reductase (AndAa), a ferredoxin (AndAb) and a two-subunit oxygenase component (AndAc and AndAd).

It catalyses the reaction anthranilate + NADH + O2 + 3 H(+) = catechol + NH4(+) + CO2 + NAD(+). The enzyme catalyses anthranilate + NADPH + O2 + 3 H(+) = catechol + NH4(+) + CO2 + NADP(+). The protein operates within aromatic compound metabolism; anthranilate degradation via hydroxylation; catechol from anthranilate: step 1/1. Functionally, oxygenase component of anthranilate dioxygenase multicomponent enzyme system which catalyzes the incorporation of both atoms of molecular oxygen into anthranilate to form catechol. Can also act on benzoate and salicylate but not on 2-chlorobenzoate or o-toluate. The chain is Anthranilate 1,2-dioxygenase small subunit from Burkholderia cepacia (Pseudomonas cepacia).